The chain runs to 91 residues: DNA-binding protein HRL18 (91 aa).

This sequence belongs to the bacterial histone-like protein family.

Functionally, histone-like DNA-binding protein which is capable of wrapping DNA to stabilize it, and thus to prevent its denaturation under extreme environmental conditions. In Rhizobium leguminosarum, this protein is DNA-binding protein HRL18.